We begin with the raw amino-acid sequence, 204 residues long: Ras-related protein RabL (204 aa).

A GTP-binding site is contributed by 14-21; sequence GDSNVGKT. The Effector region signature appears at 36–44; sequence RPPSIGPDY. Residues 62-66 and 120-123 each bind GTP; these read DTCGQ and TKSD. Residues Cys-203 and Cys-204 are each lipidated (S-geranylgeranyl cysteine).

The protein belongs to the small GTPase superfamily. Rab family.

The protein localises to the cell membrane. The sequence is that of Ras-related protein RabL (rabL) from Dictyostelium discoideum (Social amoeba).